Reading from the N-terminus, the 162-residue chain is MEGIMKKFFALMTLIAGISFSLDFACVDTNKVIRESKFIAKAQTELRKELEKYQKLIQEKQKKLEALKKSLESKALSEKAKEKKAKEIEQLEDELRKLQVEAQSKLSRKKAELEKMVFDKVIKIVESTAKKKKIKAVFDCNSMLYWDKKIDITNEVLKELDK.

Residues 1 to 21 form the signal peptide; that stretch reads MEGIMKKFFALMTLIAGISFS. Residues 32–118 are a coiled coil; sequence VIRESKFIAK…KKAELEKMVF (87 aa).

It belongs to the Skp family.

This is an uncharacterized protein from Aquifex aeolicus (strain VF5).